A 311-amino-acid chain; its full sequence is Pyrimidine-specific ribonucleoside hydrolase RihA (311 aa).

His-240 is a catalytic residue.

It belongs to the IUNH family. RihA subfamily.

Functionally, hydrolyzes cytidine or uridine to ribose and cytosine or uracil, respectively. The polypeptide is Pyrimidine-specific ribonucleoside hydrolase RihA (Salmonella arizonae (strain ATCC BAA-731 / CDC346-86 / RSK2980)).